Reading from the N-terminus, the 464-residue chain is Cell division protein FtsA (464 aa).

A disordered region spans residues 392–464; that stretch reads EVIESDKDSE…FKKLMKSLFE (73 aa). Over residues 416–455 the composition is skewed to basic and acidic residues; it reads KKENDEVAPEAPREESYEDRENHLEDEQQTEGKAKEESKF.

It belongs to the FtsA/MreB family. Self-interacts. Interacts with FtsZ.

It is found in the cell membrane. Functionally, cell division protein that is involved in the assembly of the Z ring. May serve as a membrane anchor for the Z ring. In Staphylococcus epidermidis (strain ATCC 35984 / DSM 28319 / BCRC 17069 / CCUG 31568 / BM 3577 / RP62A), this protein is Cell division protein FtsA.